Consider the following 316-residue polypeptide: Beta-ketoacyl-[acyl-carrier-protein] synthase III 1 (316 aa).

Residues Cys112 and His243 contribute to the active site. Residues 244–248 form an ACP-binding region; the sequence is QANYR. The active site involves Asn273.

This sequence belongs to the thiolase-like superfamily. FabH family. As to quaternary structure, homodimer.

It localises to the cytoplasm. It carries out the reaction malonyl-[ACP] + acetyl-CoA + H(+) = 3-oxobutanoyl-[ACP] + CO2 + CoA. It participates in lipid metabolism; fatty acid biosynthesis. In terms of biological role, catalyzes the condensation reaction of fatty acid synthesis by the addition to an acyl acceptor of two carbons from malonyl-ACP. Catalyzes the first condensation reaction which initiates fatty acid synthesis and may therefore play a role in governing the total rate of fatty acid production. Possesses both acetoacetyl-ACP synthase and acetyl transacylase activities. Its substrate specificity determines the biosynthesis of branched-chain and/or straight-chain of fatty acids. The sequence is that of Beta-ketoacyl-[acyl-carrier-protein] synthase III 1 from Vibrio vulnificus (strain YJ016).